The sequence spans 486 residues: BTB/POZ domain and ankyrin repeat-containing protein NBCL (486 aa).

The BTB domain occupies 25–115; sequence SDVTFSVEGR…LYSGQVSIVP (91 aa). The C2HC NPR-type zinc finger occupies 121–135; the sequence is RPNCGERGCWHTHCS. Zn(2+) is bound by residues Cys124, Cys129, His131, and Cys134. ANK repeat units lie at residues 257–286, 287–316, 321–350, and 354–388; these read QKIRRMRRALDSSDVELVKLMVMGEGLNLD, EALALHYAVENCSREVVKALLELGAADVNY, AGKTPLHIAAEMVSPDMVAVLLDHHADPNV, and DNVTPLDILRTLTSDFLFKGAIPGLTHIEPNKLRL. 2 disordered regions span residues 403–441 and 464–486; these read EEGNANNNPPSSTTTTLPMYHHPMNDDHNSSSSSGNNHN and QMSDDHGGRHGDPAMYHHSHHDY. 2 stretches are compositionally biased toward low complexity: residues 406–418 and 432–441; these read NANNNPPSSTTTT and SSSSSGNNHN. Residues 466-475 show a composition bias toward basic and acidic residues; it reads SDDHGGRHGD.

The protein belongs to the plant 'ANKYRIN-BTB/POZ' family. 'NOOT-BOP-COCH-like' (NBCL) subfamily. As to quaternary structure, homodimer.

The protein localises to the nucleus. It localises to the cytoplasm. It is found in the cell membrane. The protein operates within protein modification; protein ubiquitination. Functionally, may act as a substrate-specific adapter of an E3 ubiquitin-protein ligase complex (CUL3-RBX1-BTB) which mediates the ubiquitination and subsequent proteasomal degradation of target proteins. Transcriptional co-regulator involved in the promotion of leaf and floral meristem fate and determinacy. Necessary for the development of stipules at the base of petioles. Required for the abscission of senescent organs, probably by regulating the cell wall disorganization in abscission zones (AZs, e.g. pulvini at the base of leaves). Promotes slightly root-cap border cells separation from the root tip. Involved in the coordination of the symbiotic nodule developmental program; promotes the formation of root nodules by interacting directly with APP1 to modulate the expression of the nuclear transcription factor Y subunit (NF-YA1), a key nodulin. Necessary for the robust maintenance of nodule identity throughout the nodule developmental program. In Lupinus angustifolius (Narrow-leaved blue lupine), this protein is BTB/POZ domain and ankyrin repeat-containing protein NBCL.